The chain runs to 295 residues: MMLMDTSLIGAINLTIHAFLVGSLLLGLHRKIMARIQGRPGPPIIQYLLHTLKFYVKEITFPITAGNPLYIFVALLDIAIWLAALIIAIDFKSSLLIIIGIYVLQKIVEHGCGLSSGSPYGKIGGVRSVFSAAAEVPLFAVVAAIYLTTHSVLISDILSYQEIHGSLLFKMPICAFAFFILLVSKAPNSPFGIVKGKDIVSGYMTEHYGLLGAIIYIAEAIAYFVLLWLFIAVFIGPLVINSPVLTLAVMVVMTVILAFVNGLTPLLAPHHSVMLQMTIAGLVLCDVLYRLIVGG.

The next 8 membrane-spanning stretches (helical) occupy residues 8 to 28 (LIGA…LLGL), 69 to 89 (LYIF…IIAI), 129 to 149 (VFSA…YLTT), 163 to 183 (IHGS…ILLV), 199 to 219 (IVSG…YIAE), 220 to 240 (AIAY…PLVI), 243 to 263 (PVLT…VNGL), and 273 to 293 (VMLQ…RLIV).

The protein belongs to the complex I subunit 1 family.

The protein resides in the cell membrane. The catalysed reaction is a ubiquinone + NADH + 5 H(+)(in) = a ubiquinol + NAD(+) + 4 H(+)(out). This chain is Putative NADH-ubiquinone oxidoreductase MJ0520, found in Methanocaldococcus jannaschii (strain ATCC 43067 / DSM 2661 / JAL-1 / JCM 10045 / NBRC 100440) (Methanococcus jannaschii).